A 431-amino-acid polypeptide reads, in one-letter code: Acyl transferase 8 (431 aa).

Histidine 169 (proton acceptor) is an active-site residue. Disordered stretches follow at residues 220 to 247 (VADA…RAPA), 260 to 313 (HHAG…DHLR), and 331 to 400 (GLRV…PPPT). A compositionally biased stretch (low complexity) spans 224 to 234 (RGGVRPGVPRP). Residues 264 to 273 (DGGGGGGGGR) are compositionally biased toward gly residues. Composition is skewed to basic residues over residues 297–306 (ERRRRRRRGR) and 335–380 (GRPR…RRLP). Basic and acidic residues predominate over residues 381-394 (QRHDAPRLITERAH).

This sequence belongs to the plant acyltransferase family.

Functionally, involved in the incorporation of ferulate into the cell wall. May act as arabinoxylan feruloyl transferase. In Oryza sativa subsp. japonica (Rice), this protein is Acyl transferase 8.